The primary structure comprises 140 residues: Pro-Viral epidermal growth factor (140 aa).

The N-terminal stretch at 1-18 (MSMKYLMLLFAAMIIRSF) is a signal peptide. The Extracellular portion of the chain corresponds to 19–100 (ADSGNAIETT…SENPNTTTSY (82 aa)). N-linked (GlcNAc...) asparagine; by host glycosylation is present at Asn-34. The EGF-like domain maps to 41 to 81 (AIRLCGPEGDGYCLHGDCIHARDIDGMYCRCSHGYTGIRCQ). 3 cysteine pairs are disulfide-bonded: Cys-45–Cys-58, Cys-53–Cys-69, and Cys-71–Cys-80. The N-linked (GlcNAc...) asparagine; by host glycan is linked to Asn-95. Residues 101-121 (IPSPGIMLVLVGIIIITCCLL) traverse the membrane as a helical segment. At 122–140 (SVYRFTRRTKLPIQDMVVP) the chain is on the cytoplasmic side.

Belongs to the orthopoxvirus OPG019 family. In terms of assembly, viral epidermal growth factor interacts with host EGFR and promotes EGFR dimerization. Cleaved at the cell surface by host ADAM10, thereby releasing the secreted form of VGF.

It localises to the host membrane. It is found in the secreted. Functionally, stimulates cellular proliferation (hyperplasia)and mobility around infected cells to promote rapid and efficient spread of infection. This effect is beneficial for virus replication in vivo, because poxviruses replicate possibly better in proliferating cells than in quiescent cells. Acts by binding host EGFR, inducing its dimerization, autophosphorylation and leading to activation of several cellular pathways regulating cell proliferation or cell survival. The activation by host EGFR of mitogen activated protein kinases (MAPK) and extracellular-signal regulated kinases (ERK) are essential for the positive effect of vaccinia growth factor on poxvirus virulence in vivo. In Bos taurus (Bovine), this protein is Pro-Viral epidermal growth factor (OPG019).